The chain runs to 1357 residues: DNA-directed RNA polymerase subunit beta (1357 aa).

This sequence belongs to the RNA polymerase beta chain family. The RNAP catalytic core consists of 2 alpha, 1 beta, 1 beta' and 1 omega subunit. When a sigma factor is associated with the core the holoenzyme is formed, which can initiate transcription.

The catalysed reaction is RNA(n) + a ribonucleoside 5'-triphosphate = RNA(n+1) + diphosphate. DNA-dependent RNA polymerase catalyzes the transcription of DNA into RNA using the four ribonucleoside triphosphates as substrates. In Acinetobacter baumannii (strain ATCC 17978 / DSM 105126 / CIP 53.77 / LMG 1025 / NCDC KC755 / 5377), this protein is DNA-directed RNA polymerase subunit beta.